The sequence spans 118 residues: Large ribosomal subunit protein bL20 (118 aa).

Belongs to the bacterial ribosomal protein bL20 family.

Functionally, binds directly to 23S ribosomal RNA and is necessary for the in vitro assembly process of the 50S ribosomal subunit. It is not involved in the protein synthesizing functions of that subunit. The polypeptide is Large ribosomal subunit protein bL20 (Klebsiella pneumoniae (strain 342)).